A 385-amino-acid polypeptide reads, in one-letter code: Alanine--glyoxylate aminotransferase 1 (385 aa).

Lys201 is modified (N6-(pyridoxal phosphate)lysine). A substrate-binding site is contributed by Arg354.

This sequence belongs to the class-V pyridoxal-phosphate-dependent aminotransferase family. Homodimer. It depends on pyridoxal 5'-phosphate as a cofactor.

The catalysed reaction is glyoxylate + L-alanine = glycine + pyruvate. The protein operates within amino-acid biosynthesis; glycine biosynthesis; glycine from glyoxylate: step 1/1. Has alanine:glyoxylate aminotransferase activity. This is Alanine--glyoxylate aminotransferase 1 from Saccharomyces cerevisiae (strain ATCC 204508 / S288c) (Baker's yeast).